We begin with the raw amino-acid sequence, 380 residues long: Lipid-A-disaccharide synthase (380 aa).

Belongs to the LpxB family.

It carries out the reaction a lipid X + a UDP-2-N,3-O-bis[(3R)-3-hydroxyacyl]-alpha-D-glucosamine = a lipid A disaccharide + UDP + H(+). Its pathway is bacterial outer membrane biogenesis; LPS lipid A biosynthesis. Functionally, condensation of UDP-2,3-diacylglucosamine and 2,3-diacylglucosamine-1-phosphate to form lipid A disaccharide, a precursor of lipid A, a phosphorylated glycolipid that anchors the lipopolysaccharide to the outer membrane of the cell. The sequence is that of Lipid-A-disaccharide synthase from Francisella tularensis subsp. novicida (strain U112).